The primary structure comprises 448 residues: UDP-N-acetylmuramoylalanine--D-glutamate ligase (448 aa).

Gly112 to Thr118 is an ATP binding site.

This sequence belongs to the MurCDEF family.

Its subcellular location is the cytoplasm. The enzyme catalyses UDP-N-acetyl-alpha-D-muramoyl-L-alanine + D-glutamate + ATP = UDP-N-acetyl-alpha-D-muramoyl-L-alanyl-D-glutamate + ADP + phosphate + H(+). The protein operates within cell wall biogenesis; peptidoglycan biosynthesis. In terms of biological role, cell wall formation. Catalyzes the addition of glutamate to the nucleotide precursor UDP-N-acetylmuramoyl-L-alanine (UMA). The chain is UDP-N-acetylmuramoylalanine--D-glutamate ligase from Acinetobacter baumannii (strain AB307-0294).